We begin with the raw amino-acid sequence, 71 residues long: Cytochrome c oxidase subunit 7, mitochondrial (71 aa).

Residues M1–S35 lie on the Mitochondrial matrix side of the membrane. A helical membrane pass occupies residues G36–S58. Topologically, residues R59–D71 are mitochondrial intermembrane.

The protein belongs to the cytochrome c oxidase VIIa family. As to quaternary structure, component of the cytochrome c oxidase (complex IV, CIV), a multisubunit enzyme composed of 11 subunits. The complex is composed of a catalytic core of 3 subunits Cox1, Cox2 and Cox3, encoded in the mitochondrial DNA, and 8 supernumerary subunits Cox4, Cox5a/Cox5, Cox6, Cox7, Cox8, Cox7a/Cox9, Cox6b/Cox12 and Cox6a/Cox13, which are encoded in the nuclear genome. The complex exists as a monomer or a dimer and forms respiratory supercomplexes (SCs) in the inner mitochondrial membrane with NADH-ubiquinone oxidoreductase (complex I, CI) and ubiquinol-cytochrome c oxidoreductase (cytochrome b-c1 complex, complex III, CIII), resulting in various different assemblies (supercomplexes I(1)IV(1), I(1)III(3)IV(2), III(2)IV(1) and III(2)IV(2) as well as larger supercomplexes of compositions like I(1)III(2)IV(5-6)).

The protein resides in the mitochondrion inner membrane. Its pathway is energy metabolism; oxidative phosphorylation. Its function is as follows. Component of the cytochrome c oxidase, the last enzyme in the mitochondrial electron transport chain which drives oxidative phosphorylation. The respiratory chain contains 3 multisubunit complexes succinate dehydrogenase (complex II, CII), ubiquinol-cytochrome c oxidoreductase (cytochrome b-c1 complex, complex III, CIII) and cytochrome c oxidase (complex IV, CIV), that cooperate to transfer electrons derived from NADH and succinate to molecular oxygen, creating an electrochemical gradient over the inner membrane that drives transmembrane transport and the ATP synthase. Cytochrome c oxidase is the component of the respiratory chain that catalyzes the reduction of oxygen to water. Electrons originating from reduced cytochrome c in the intermembrane space (IMS) are transferred via the dinuclear copper A center (CU(A)) of Cox2 and heme A of Cox1 to the active site in Cox1, a binuclear center (BNC) formed by heme A3 and copper B (CU(B)). The BNC reduces molecular oxygen to 2 water molecules using 4 electrons from cytochrome c in the IMS and 4 protons from the mitochondrial matrix. The chain is Cytochrome c oxidase subunit 7, mitochondrial from Neurospora crassa (strain ATCC 24698 / 74-OR23-1A / CBS 708.71 / DSM 1257 / FGSC 987).